A 282-amino-acid polypeptide reads, in one-letter code: Pantothenate synthetase (282 aa).

Position 30 to 37 (30 to 37 (MGYLHEGH)) interacts with ATP. His-37 serves as the catalytic Proton donor. Gln-61 contacts (R)-pantoate. Gln-61 provides a ligand contact to beta-alanine. Residue 148-151 (GQKD) coordinates ATP. Gln-154 lines the (R)-pantoate pocket. ATP is bound by residues Val-177 and 185–188 (MSSR).

The protein belongs to the pantothenate synthetase family. As to quaternary structure, homodimer.

The protein localises to the cytoplasm. It carries out the reaction (R)-pantoate + beta-alanine + ATP = (R)-pantothenate + AMP + diphosphate + H(+). It functions in the pathway cofactor biosynthesis; (R)-pantothenate biosynthesis; (R)-pantothenate from (R)-pantoate and beta-alanine: step 1/1. Its function is as follows. Catalyzes the condensation of pantoate with beta-alanine in an ATP-dependent reaction via a pantoyl-adenylate intermediate. In Syntrophomonas wolfei subsp. wolfei (strain DSM 2245B / Goettingen), this protein is Pantothenate synthetase.